The following is a 166-amino-acid chain: MSGIIEAKKQLVEQIADQLKNSVSTVIVNYRGLTVAEVTELRKQLREAGVEYKVYKNTMMRRAAEQAGLEGLDEFLTGPTAVATSTEDVVAPAKVIAGFAKEHEALEIKTGVMDGSIISAEEVKTVGSLPSHDGLVSMLLSVLQAPVRNFAYAVKAVGESKEESAE.

The protein belongs to the universal ribosomal protein uL10 family. As to quaternary structure, part of the ribosomal stalk of the 50S ribosomal subunit. The N-terminus interacts with L11 and the large rRNA to form the base of the stalk. The C-terminus forms an elongated spine to which L12 dimers bind in a sequential fashion forming a multimeric L10(L12)X complex.

Its function is as follows. Forms part of the ribosomal stalk, playing a central role in the interaction of the ribosome with GTP-bound translation factors. The protein is Large ribosomal subunit protein uL10 of Staphylococcus carnosus (strain TM300).